We begin with the raw amino-acid sequence, 380 residues long: Queuine tRNA-ribosyltransferase (380 aa).

D96 (proton acceptor) is an active-site residue. Substrate is bound by residues 96–100, D150, Q193, and G220; that span reads DSGGF. Positions 251-257 are RNA binding; sequence GVGAPDS. Residue D270 is the Nucleophile of the active site. The segment at 275–279 is RNA binding; important for wobble base 34 recognition; it reads TRIAR. C308, C310, C313, and H339 together coordinate Zn(2+).

It belongs to the queuine tRNA-ribosyltransferase family. In terms of assembly, homodimer. Within each dimer, one monomer is responsible for RNA recognition and catalysis, while the other monomer binds to the replacement base PreQ1. Zn(2+) serves as cofactor.

The enzyme catalyses 7-aminomethyl-7-carbaguanine + guanosine(34) in tRNA = 7-aminomethyl-7-carbaguanosine(34) in tRNA + guanine. The protein operates within tRNA modification; tRNA-queuosine biosynthesis. Catalyzes the base-exchange of a guanine (G) residue with the queuine precursor 7-aminomethyl-7-deazaguanine (PreQ1) at position 34 (anticodon wobble position) in tRNAs with GU(N) anticodons (tRNA-Asp, -Asn, -His and -Tyr). Catalysis occurs through a double-displacement mechanism. The nucleophile active site attacks the C1' of nucleotide 34 to detach the guanine base from the RNA, forming a covalent enzyme-RNA intermediate. The proton acceptor active site deprotonates the incoming PreQ1, allowing a nucleophilic attack on the C1' of the ribose to form the product. After dissociation, two additional enzymatic reactions on the tRNA convert PreQ1 to queuine (Q), resulting in the hypermodified nucleoside queuosine (7-(((4,5-cis-dihydroxy-2-cyclopenten-1-yl)amino)methyl)-7-deazaguanosine). The sequence is that of Queuine tRNA-ribosyltransferase from Streptococcus suis (strain 98HAH33).